The sequence spans 366 residues: tRNA-specific 2-thiouridylase MnmA (366 aa).

Residues 6 to 13 (AMSGGVDS) and leucine 32 each bind ATP. Residue cysteine 101 is the Nucleophile of the active site. Cysteine 101 and cysteine 197 are joined by a disulfide. Glycine 125 lines the ATP pocket. An interaction with tRNA region spans residues 147–149 (KDQ). Cysteine 197 acts as the Cysteine persulfide intermediate in catalysis.

This sequence belongs to the MnmA/TRMU family.

The protein resides in the cytoplasm. The enzyme catalyses S-sulfanyl-L-cysteinyl-[protein] + uridine(34) in tRNA + AH2 + ATP = 2-thiouridine(34) in tRNA + L-cysteinyl-[protein] + A + AMP + diphosphate + H(+). Catalyzes the 2-thiolation of uridine at the wobble position (U34) of tRNA, leading to the formation of s(2)U34. In Cutibacterium acnes (strain DSM 16379 / KPA171202) (Propionibacterium acnes), this protein is tRNA-specific 2-thiouridylase MnmA.